Here is a 573-residue protein sequence, read N- to C-terminus: Phosphoenolpyruvate-protein phosphotransferase (573 aa).

His190 (tele-phosphohistidine intermediate) is an active-site residue. Arg297 and Arg333 together coordinate phosphoenolpyruvate. Mg(2+) is bound by residues Glu432 and Asp456. Phosphoenolpyruvate is bound by residues 455 to 456 and Arg466; that span reads ND. The Proton donor role is filled by Cys503.

Belongs to the PEP-utilizing enzyme family. Homodimer. Mg(2+) serves as cofactor.

Its subcellular location is the cytoplasm. It catalyses the reaction L-histidyl-[protein] + phosphoenolpyruvate = N(pros)-phospho-L-histidyl-[protein] + pyruvate. Functionally, general (non sugar-specific) component of the phosphoenolpyruvate-dependent sugar phosphotransferase system (sugar PTS). This major carbohydrate active-transport system catalyzes the phosphorylation of incoming sugar substrates concomitantly with their translocation across the cell membrane. Enzyme I transfers the phosphoryl group from phosphoenolpyruvate (PEP) to the phosphoryl carrier protein (HPr). The polypeptide is Phosphoenolpyruvate-protein phosphotransferase (ptsI) (Priestia megaterium (Bacillus megaterium)).